A 203-amino-acid polypeptide reads, in one-letter code: Urease accessory protein UreG (203 aa).

Residue 14 to 21 (GPVGSGKT) coordinates GTP.

It belongs to the SIMIBI class G3E GTPase family. UreG subfamily. Homodimer. UreD, UreF and UreG form a complex that acts as a GTP-hydrolysis-dependent molecular chaperone, activating the urease apoprotein by helping to assemble the nickel containing metallocenter of UreC. The UreE protein probably delivers the nickel.

It localises to the cytoplasm. Functionally, facilitates the functional incorporation of the urease nickel metallocenter. This process requires GTP hydrolysis, probably effectuated by UreG. This is Urease accessory protein UreG from Rhizobium meliloti (strain 1021) (Ensifer meliloti).